Consider the following 127-residue polypeptide: Small ribosomal subunit protein uS12 (127 aa).

Asp89 carries the 3-methylthioaspartic acid modification. The interval 102-127 (LDTAGVKDRKQGRSKYGTKRPKEAKK) is disordered. Positions 113–127 (GRSKYGTKRPKEAKK) are enriched in basic residues.

The protein belongs to the universal ribosomal protein uS12 family. Part of the 30S ribosomal subunit. Contacts proteins S8 and S17. May interact with IF1 in the 30S initiation complex.

In terms of biological role, with S4 and S5 plays an important role in translational accuracy. Its function is as follows. Interacts with and stabilizes bases of the 16S rRNA that are involved in tRNA selection in the A site and with the mRNA backbone. Located at the interface of the 30S and 50S subunits, it traverses the body of the 30S subunit contacting proteins on the other side and probably holding the rRNA structure together. The combined cluster of proteins S8, S12 and S17 appears to hold together the shoulder and platform of the 30S subunit. In Nostoc punctiforme (strain ATCC 29133 / PCC 73102), this protein is Small ribosomal subunit protein uS12.